Here is a 62-residue protein sequence, read N- to C-terminus: Large ribosomal subunit protein bL33 (62 aa).

It belongs to the bacterial ribosomal protein bL33 family.

The protein is Large ribosomal subunit protein bL33 of Acaryochloris marina (strain MBIC 11017).